Here is a 509-residue protein sequence, read N- to C-terminus: Telomeric repeat-binding factor 2-interacting protein 1 (509 aa).

Residues 1–91 (MAALGGLTHS…KLLDVDDYRL (91 aa)) form the BRCT domain. Residues 93–168 (GSHGRPRKSQ…RKKENKMDCS (76 aa)) are disordered. Residues 115–127 (VGESSQESDQKQQ) show a composition bias toward polar residues. A compositionally biased stretch (basic and acidic residues) spans 159 to 168 (RKKENKMDCS). One can recognise a Myb-like domain in the interval 185–239 (RRNVFTEKEDVAIMLYVRENAPHRGTGVSLWKEMEQKQVVKRTWQAIKNRYFRYL). 2 disordered regions span residues 249–359 (LTDD…ENQD) and 399–423 (DLPS…ESEG). Composition is skewed to basic and acidic residues over residues 286–296 (GVAEKTGEKLS) and 321–344 (VEER…KSTE). Polar residues predominate over residues 401 to 418 (PSSQSQTQVDEVSSSPDA). Residues 493–509 (QKYGADNVAKRVAFLAS) carry the Nuclear localization signal motif.

This sequence belongs to the RAP1 family. Homodimer. Component of the shelterin complex (telosome). Interacts with terf2; the interaction is direct.

It localises to the nucleus. The protein resides in the chromosome. It is found in the telomere. Acts both as a regulator of telomere function and as a transcription regulator. Involved in the regulation of telomere length and protection as a component of the shelterin complex (telosome). Does not bind DNA directly: recruited to telomeric double-stranded 5'-TTAGGG-3' repeats via its interaction with terf2. Independently of its function in telomeres, also acts as a transcription regulator: recruited to extratelomeric 5'-TTAGGG-3' sites via its association with terf2 or other factors, and regulates gene expression. The sequence is that of Telomeric repeat-binding factor 2-interacting protein 1 (terf2ip) from Xenopus tropicalis (Western clawed frog).